A 201-amino-acid chain; its full sequence is NADH-quinone oxidoreductase subunit C (201 aa).

Belongs to the complex I 30 kDa subunit family. NDH-1 is composed of 14 different subunits. Subunits NuoB, C, D, E, F, and G constitute the peripheral sector of the complex.

It is found in the cell inner membrane. It catalyses the reaction a quinone + NADH + 5 H(+)(in) = a quinol + NAD(+) + 4 H(+)(out). Its function is as follows. NDH-1 shuttles electrons from NADH, via FMN and iron-sulfur (Fe-S) centers, to quinones in the respiratory chain. The immediate electron acceptor for the enzyme in this species is believed to be ubiquinone. Couples the redox reaction to proton translocation (for every two electrons transferred, four hydrogen ions are translocated across the cytoplasmic membrane), and thus conserves the redox energy in a proton gradient. This Azoarcus sp. (strain BH72) protein is NADH-quinone oxidoreductase subunit C.